Consider the following 399-residue polypeptide: Phosphomevalonate dehydratase large subunit (399 aa).

(R)-5-phosphomevalonate contacts are provided by Gly54, Val55, Ser56, Asn85, and Pro86. Cys125 is a [4Fe-4S] cluster binding site. 2 residues coordinate (R)-5-phosphomevalonate: Glu144 and Ser145. 2 residues coordinate [4Fe-4S] cluster: Cys298 and Cys355. Lys375 provides a ligand contact to (R)-5-phosphomevalonate.

This sequence belongs to the AcnX type II large subunit family. As to quaternary structure, heterodimer composed of a large subunit (PMDh-L) and a small subunit (PMDh-S). Requires [4Fe-4S] cluster as cofactor.

It catalyses the reaction (R)-5-phosphomevalonate = (2E)-3-methyl-5-phosphooxypent-2-enoate + H2O. The protein operates within isoprenoid biosynthesis; isopentenyl diphosphate biosynthesis via mevalonate pathway. Component of a hydro-lyase that catalyzes the dehydration of mevalonate 5-phosphate (MVA5P) to form trans-anhydromevalonate 5-phosphate (tAHMP). Involved in the archaeal mevalonate (MVA) pathway, which provides fundamental precursors for isoprenoid biosynthesis, such as isopentenyl diphosphate (IPP) and dimethylallyl diphosphate (DMAPP). The protein is Phosphomevalonate dehydratase large subunit of Methanothermobacter thermautotrophicus (strain ATCC 29096 / DSM 1053 / JCM 10044 / NBRC 100330 / Delta H) (Methanobacterium thermoautotrophicum).